A 412-amino-acid chain; its full sequence is Tyrosine--tRNA ligase (412 aa).

Y31 provides a ligand contact to L-tyrosine. The 'HIGH' region motif lies at 36 to 45 (PTAPSLHIGH). Y162 and Q166 together coordinate L-tyrosine. Residues 222–226 (KIGKT) carry the 'KMSKS' region motif. Residue K225 participates in ATP binding. In terms of domain architecture, S4 RNA-binding spans 345–412 (KRWLDVVVQL…KKKKQVIDLN (68 aa)).

This sequence belongs to the class-I aminoacyl-tRNA synthetase family. TyrS type 1 subfamily. In terms of assembly, homodimer.

It localises to the cytoplasm. It carries out the reaction tRNA(Tyr) + L-tyrosine + ATP = L-tyrosyl-tRNA(Tyr) + AMP + diphosphate + H(+). Its function is as follows. Catalyzes the attachment of tyrosine to tRNA(Tyr) in a two-step reaction: tyrosine is first activated by ATP to form Tyr-AMP and then transferred to the acceptor end of tRNA(Tyr). This Chlamydia muridarum (strain MoPn / Nigg) protein is Tyrosine--tRNA ligase.